The following is a 193-amino-acid chain: Thymidine kinase (193 aa).

9 to 16 lines the ATP pocket; it reads AAMNAGKS.

Belongs to the thymidine kinase family.

It catalyses the reaction thymidine + ATP = dTMP + ADP + H(+). Its function is as follows. This thymidine kinase is one of the enzymes that catalyze DNA precursor synthesis. Although tk is a nonessential gene, some strains of host E.coli do not support the growth of phages that lack this gene. This is Thymidine kinase (TK) from Escherichia coli (Bacteriophage T4).